We begin with the raw amino-acid sequence, 73 residues long: Translation initiation factor IF-1 (73 aa).

The 72-residue stretch at 1–72 (MAKQDVIEME…TKGRITYRLR (72 aa)) folds into the S1-like domain.

This sequence belongs to the IF-1 family. As to quaternary structure, component of the 30S ribosomal translation pre-initiation complex which assembles on the 30S ribosome in the order IF-2 and IF-3, IF-1 and N-formylmethionyl-tRNA(fMet); mRNA recruitment can occur at any time during PIC assembly.

It localises to the cytoplasm. Its function is as follows. One of the essential components for the initiation of protein synthesis. Stabilizes the binding of IF-2 and IF-3 on the 30S subunit to which N-formylmethionyl-tRNA(fMet) subsequently binds. Helps modulate mRNA selection, yielding the 30S pre-initiation complex (PIC). Upon addition of the 50S ribosomal subunit IF-1, IF-2 and IF-3 are released leaving the mature 70S translation initiation complex. This Gloeobacter violaceus (strain ATCC 29082 / PCC 7421) protein is Translation initiation factor IF-1.